A 337-amino-acid polypeptide reads, in one-letter code: Anthranilate phosphoribosyltransferase (337 aa).

Residues Gly-81, 84 to 85 (GD), Ser-89, 91 to 94 (NVST), 109 to 117 (KHGNRAATS), and Ala-121 contribute to the 5-phospho-alpha-D-ribose 1-diphosphate site. An anthranilate-binding site is contributed by Gly-81. A Mg(2+)-binding site is contributed by Ser-93. Asn-112 contributes to the anthranilate binding site. Arg-167 serves as a coordination point for anthranilate. Residues Asp-226 and Glu-227 each coordinate Mg(2+).

Belongs to the anthranilate phosphoribosyltransferase family. Homodimer. The cofactor is Mg(2+).

It carries out the reaction N-(5-phospho-beta-D-ribosyl)anthranilate + diphosphate = 5-phospho-alpha-D-ribose 1-diphosphate + anthranilate. Its pathway is amino-acid biosynthesis; L-tryptophan biosynthesis; L-tryptophan from chorismate: step 2/5. Functionally, catalyzes the transfer of the phosphoribosyl group of 5-phosphorylribose-1-pyrophosphate (PRPP) to anthranilate to yield N-(5'-phosphoribosyl)-anthranilate (PRA). This chain is Anthranilate phosphoribosyltransferase, found in Methylorubrum populi (strain ATCC BAA-705 / NCIMB 13946 / BJ001) (Methylobacterium populi).